The chain runs to 376 residues: C2H2 type master regulator of conidiophore development brlA (376 aa).

Residues 20–29 show a composition bias toward low complexity; it reads TSFSSASSSA. 3 disordered regions span residues 20-47, 197-229, and 241-267; these read TSFS…ELSL, HHHH…ASPN, and EAQR…PESG. A compositionally biased stretch (polar residues) spans 34–44; that stretch reads TPSSRRSTPNE. Residues 197-209 are compositionally biased toward basic residues; sequence HHHHHNHHQHHHA. Positions 219–229 are enriched in polar residues; sequence QLHSNTGASPN. The span at 241–256 shows a compositional bias: basic and acidic residues; it reads EAQRKTSELQRAQIRE. The C2H2-type 1; degenerate zinc finger occupies 277 to 301; it reads CKCDYPGCNKAFRRNEHLKRHKQTF. The C2H2-type 2 zinc finger occupies 309–332; it reads FSCEFCGKDQFNRQDNLNNHRKLH. Residues 351–376 are disordered; it reads IIEHEERSRKRRAPPKSKAEKRDYDF. The span at 367–376 shows a compositional bias: basic and acidic residues; the sequence is SKAEKRDYDF.

It is found in the nucleus. In terms of biological role, brlA, abaA and wetA are pivotal regulators of conidiophore development and conidium maturation. They act individually and together to regulate their own expression and that of numerous other sporulation-specific genes. Binds promoters of target genes at brlA response elements (BREs) containing the conserved sequence 5'-(C/A)(A/G)AGGG(G/A)-3'. This is C2H2 type master regulator of conidiophore development brlA from Hapsidospora chrysogena (Acremonium chrysogenum).